We begin with the raw amino-acid sequence, 447 residues long: Serine/threonine-protein kinase NLK2 (447 aa).

The 290-residue stretch at 60 to 349 (PEPDRPIGYG…AKDALAHPYL (290 aa)) folds into the Protein kinase domain. ATP contacts are provided by residues 66–74 (IGYGAFGVV) and Lys-89. Asp-186 serves as the catalytic Proton acceptor.

The protein belongs to the protein kinase superfamily. CMGC Ser/Thr protein kinase family. MAP kinase subfamily. Interacts with sox11, hmgxb4/hmg2l1, rnf138/narf, stat3.1 and mef2a. It depends on Mg(2+) as a cofactor. In terms of tissue distribution, expressed widely in the ectoderm during early gastrula stage when neural induction is taking place. Expressed in the head region of neurula stage embryos. At the end of neurulation, expression becomes localized to the nervous system, and is restricted to the central nervous system, eye and head neural crest cells by the early tadpole stages.

It localises to the nucleus. Its subcellular location is the cytoplasm. The catalysed reaction is L-seryl-[protein] + ATP = O-phospho-L-seryl-[protein] + ADP + H(+). The enzyme catalyses L-threonyl-[protein] + ATP = O-phospho-L-threonyl-[protein] + ADP + H(+). With respect to regulation, activated by tyrosine and threonine phosphorylation. Negatively regulates Wnt/beta-catenin-signaling during development. Plays a role together with sox11 in neural induction during early embryogenesis. Involved in TGFbeta-mediated mesoderm induction in early embryos, acting downstream of map3k7/tak1 to phosphorylate stat3.1. Augments the rnf138/narf-directed ubiquitination and degradation of tcf/lef by enhancing the association of rnf138/narf and tcf/lef. Phosphorylates mef2a to play a role in anterior neural development, including eye formation. The polypeptide is Serine/threonine-protein kinase NLK2 (nlk.2) (Xenopus laevis (African clawed frog)).